A 796-amino-acid chain; its full sequence is Protein translocase subunit SecA 2 (796 aa).

ATP is bound by residues glutamine 84, 102–106 (GEGKT), and aspartate 496.

This sequence belongs to the SecA family. As to quaternary structure, monomer and homodimer. Part of the essential Sec protein translocation apparatus which comprises SecA, SecYEG and auxiliary proteins SecDF. Other proteins may also be involved.

It localises to the cell membrane. The protein resides in the cytoplasm. The enzyme catalyses ATP + H2O + cellular proteinSide 1 = ADP + phosphate + cellular proteinSide 2.. Functionally, part of the Sec protein translocase complex. Interacts with the SecYEG preprotein conducting channel. Has a central role in coupling the hydrolysis of ATP to the transfer of proteins into and across the cell membrane, serving as an ATP-driven molecular motor driving the stepwise translocation of polypeptide chains across the membrane. The polypeptide is Protein translocase subunit SecA 2 (Staphylococcus aureus (strain MRSA252)).